Here is a 570-residue protein sequence, read N- to C-terminus: Ferroportin (570 aa).

Topologically, residues 1-23 (MTKARDQTHQEGCCGSLANYLTS) are cytoplasmic. Residues 24–53 (AKFLLYLGHSLSTWGDRMWHFAVSVFLVEL) traverse the membrane as a helical segment. 2 residues coordinate Fe cation: Asp-39 and His-43. Topologically, residues 54–57 (YGNS) are extracellular. A helical transmembrane segment spans residues 58–84 (LLLTAVYGLVVAGSVLVLGAIIGDWVD). The Cytoplasmic portion of the chain corresponds to 85–87 (KNA). A helical transmembrane segment spans residues 88–118 (RLKVAQTSLVVQNVSVILCGIILMMVFLHKN). Residues 119–126 (ELLTMYHG) lie on the Extracellular side of the membrane. The chain crosses the membrane as a helical span at residues 127–162 (WVLTVCYILIITIANIANLASTATAITIQRDWIVVV). The Cytoplasmic segment spans residues 163-164 (AG). Residues 165 to 195 (ENRSRLADMNATIRRIDQLTNILAPMAVGQI) form a helical membrane-spanning segment. Topologically, residues 196–202 (MTFGSPV) are extracellular. Residues 203–229 (IGCGFISGWNLVSMCVEYFLLWKVYQK) traverse the membrane as a helical segment. Residues 230–306 (TPALAVKAAL…DGWVSYYNQP (77 aa)) are Cytoplasmic-facing. The helical transmembrane segment at 307 to 333 (VFLAGMGLAFLYMTVLGFDCITTGYAY) threads the bilayer. Position 326 (Cys-326) interacts with Fe cation. Residues 334–338 (TQGLS) lie on the Extracellular side of the membrane. A helical transmembrane segment spans residues 339–366 (GSILSILMGASAITGIMGTVAFTWLRRK). Topologically, residues 367–368 (CG) are cytoplasmic. A helical transmembrane segment spans residues 369-391 (LVRTGLFSGLAQLSCLILCVISV). Residues 392–452 (FMPGSPLDLS…EMSTKPIPIV (61 aa)) lie on the Extracellular side of the membrane. Asn-437 carries an N-linked (GlcNAc...) asparagine glycan. A helical membrane pass occupies residues 453–482 (SVSLLFAGVIAARIGLWSFDLTVTQLLQEN). Residues 483–487 (VIESE) lie on the Cytoplasmic side of the membrane. Residues 488 to 512 (RGIINGVQNSMNYLLDLLHFIMVIL) form a helical membrane-spanning segment. His-506 provides a ligand contact to Fe cation. Residues 513–515 (APN) are Extracellular-facing. Residues 516 to 541 (PEAFGLLVLISVSFVAMGHLMYFRFA) traverse the membrane as a helical segment. Topologically, residues 542 to 570 (QKTLGNQIFVCGPDEKEVTDENQPNTSVV) are cytoplasmic.

Belongs to the ferroportin (FP) (TC 2.A.100) family. SLC40A subfamily. As to quaternary structure, identified in a complex with STOM. Interacts with HAMP; affinity of the peptide hormone HAMP for SLC40A1 increases by 80-fold in the presence of iron and the interaction promotes SLC40A1 ubiquitination and degradation. Part of a complex composed of SLC40A1/ferroportin, TF/transferrin and HEPH/hephaestin that transfers iron from cells to transferrin. In terms of processing, polyubiquitinated by RNF217; leading to proteasomal degradation. Under conditions of high systemic iron levels, both the hormone peptide hepcidin/HAMP and holo(iron bound)-transferrin/TF induce the ubiquitination, internalization and proteasomal degradation of SLC40A1 to control iron release from cells. As to expression, high expression in spleen, liver, kidney, heart and duodenum.

Its subcellular location is the cell membrane. The protein resides in the basolateral cell membrane. The enzyme catalyses Fe(2+)(in) = Fe(2+)(out). Functionally, transports Fe(2+) from the inside of a cell to the outside of the cell, playing a key role for maintaining systemic iron homeostasis. Transports iron from intestinal, splenic, hepatic cells, macrophages and erythrocytes into the blood to provide iron to other tissues. Controls therefore dietary iron uptake, iron recycling by macrophages and erythrocytes, and release of iron stores in hepatocytes. When iron is in excess in serum, circulating HAMP/hepcidin levels increase resulting in a degradation of SLC40A1, thus limiting the iron efflux to plasma. The protein is Ferroportin of Mus musculus (Mouse).